A 125-amino-acid polypeptide reads, in one-letter code: 14 kDa phosphohistidine phosphatase (125 aa).

Position 2 is an N-acetylalanine (A2). Residue K21 participates in substrate binding. The active-site Proton acceptor is H53. 94–96 (SMG) serves as a coordination point for substrate.

Monomer.

Its subcellular location is the cytoplasm. The catalysed reaction is N(pros)-phospho-L-histidyl-[protein] + H2O = L-histidyl-[protein] + phosphate. The enzyme catalyses N(tele)-phospho-L-histidyl-[protein] + H2O = L-histidyl-[protein] + phosphate. Exhibits phosphohistidine phosphatase activity. In terms of biological role, may have a significant involvement in neuronal signaling. This Oryctolagus cuniculus (Rabbit) protein is 14 kDa phosphohistidine phosphatase (PHPT1).